The sequence spans 152 residues: Endoribonuclease YbeY (152 aa).

H117, H121, and H127 together coordinate Zn(2+).

Belongs to the endoribonuclease YbeY family. It depends on Zn(2+) as a cofactor.

The protein localises to the cytoplasm. Its function is as follows. Single strand-specific metallo-endoribonuclease involved in late-stage 70S ribosome quality control and in maturation of the 3' terminus of the 16S rRNA. This Borreliella afzelii (strain PKo) (Borrelia afzelii) protein is Endoribonuclease YbeY.